We begin with the raw amino-acid sequence, 279 residues long: MRNKAVLDLHLVSDSTCETVIAVARSAVEHFKSLEVNEFVWSLVGSKRQVDKVMLNINPERHNLIMYTVVDDDLRKYLKEKATAQSVRCIPVLAHVIREISCYLQVTKDPNAHPHKLGDEYFNRIDAINYTISHDDGQNLWDIDQADIIIVGVSRTSKSPTSIYLAYRGYRVVNIPLVCSVQLPVDPATIADKLVVGLTIDADRLIQIRRNRLISMKHQENCNYVSYEQVVEEISEMKKICAKNRWPTIDVTQKSVEEIAATIIQFFNRKNNRTGDALY.

Residue 152-159 (GVSRTSKS) coordinates ADP.

This sequence belongs to the pyruvate, phosphate/water dikinase regulatory protein family. PDRP subfamily.

It catalyses the reaction N(tele)-phospho-L-histidyl/L-threonyl-[pyruvate, phosphate dikinase] + ADP = N(tele)-phospho-L-histidyl/O-phospho-L-threonyl-[pyruvate, phosphate dikinase] + AMP + H(+). The enzyme catalyses N(tele)-phospho-L-histidyl/O-phospho-L-threonyl-[pyruvate, phosphate dikinase] + phosphate + H(+) = N(tele)-phospho-L-histidyl/L-threonyl-[pyruvate, phosphate dikinase] + diphosphate. Functionally, bifunctional serine/threonine kinase and phosphorylase involved in the regulation of the pyruvate, phosphate dikinase (PPDK) by catalyzing its phosphorylation/dephosphorylation. The sequence is that of Putative pyruvate, phosphate dikinase regulatory protein from Anaplasma marginale (strain St. Maries).